Reading from the N-terminus, the 107-residue chain is Glutaredoxin 4 (107 aa).

A Glutaredoxin domain is found at 4–106; the sequence is IDKIKQQINE…TLLKETATKH (103 aa). Residue lysine 21 coordinates glutathione. Residue cysteine 29 coordinates [2Fe-2S] cluster. Glutathione-binding positions include arginine 58, phenylalanine 70, and 83-84; that span reads CD.

This sequence belongs to the glutaredoxin family. Monothiol subfamily. Homodimer.

It localises to the cytoplasm. Functionally, monothiol glutaredoxin involved in the biogenesis of iron-sulfur clusters. This chain is Glutaredoxin 4 (grxD), found in Haemophilus ducreyi (strain 35000HP / ATCC 700724).